A 164-amino-acid chain; its full sequence is uncharacterized protein (164 aa).

A helical membrane pass occupies residues 46–66 (FIRPNIYLIIFIIIVLLLLYY). Residues 72-137 (KADKEKEKLE…YNLNKENLRE (66 aa)) are a coiled coil. Residues 76-91 (EKEKLEDTDKEFDKST) are compositionally biased toward basic and acidic residues. A disordered region spans residues 76-114 (EKEKLEDTDKEFDKSTNNDTNSKKIYHRQKNSKTLNSSK).

The protein localises to the membrane. This is an uncharacterized protein from Acanthamoeba polyphaga mimivirus (APMV).